We begin with the raw amino-acid sequence, 431 residues long: Peptidase B (431 aa).

Mn(2+) contacts are provided by lysine 196 and aspartate 201. Lysine 208 is a catalytic residue. Aspartate 219, aspartate 278, and glutamate 280 together coordinate Mn(2+). Arginine 282 is an active-site residue.

The protein belongs to the peptidase M17 family. In terms of assembly, homohexamer. Mn(2+) serves as cofactor.

Its subcellular location is the cytoplasm. It carries out the reaction Release of an N-terminal amino acid, Xaa, from a peptide or arylamide. Xaa is preferably Glu or Asp but may be other amino acids, including Leu, Met, His, Cys and Gln.. Its function is as follows. Probably plays an important role in intracellular peptide degradation. This chain is Peptidase B, found in Photorhabdus laumondii subsp. laumondii (strain DSM 15139 / CIP 105565 / TT01) (Photorhabdus luminescens subsp. laumondii).